The sequence spans 462 residues: Putative amidase AmiB2 (462 aa).

Residues Lys81 and Ser155 each act as charge relay system in the active site. Ser179 acts as the Acyl-ester intermediate in catalysis.

This sequence belongs to the amidase family.

It carries out the reaction a monocarboxylic acid amide + H2O = a monocarboxylate + NH4(+). This chain is Putative amidase AmiB2 (amiB2), found in Mycobacterium bovis (strain ATCC BAA-935 / AF2122/97).